The sequence spans 545 residues: CTP synthase (545 aa).

The segment at 1–265 (MTKYIFITGG…DEIVVKKLSL (265 aa)) is amidoligase domain. A CTP-binding site is contributed by S13. Position 13 (S13) interacts with UTP. ATP-binding positions include 14-19 (SLGKGI) and D71. Mg(2+) is bound by residues D71 and E139. CTP is bound by residues 146-148 (DIE), 186-191 (KTKPTQ), and K222. Residues 186–191 (KTKPTQ) and K222 each bind UTP. One can recognise a Glutamine amidotransferase type-1 domain in the interval 290–541 (KIAMVGKYTE…VLAARIHHQE (252 aa)). G351 provides a ligand contact to L-glutamine. The active-site Nucleophile; for glutamine hydrolysis is C378. L-glutamine contacts are provided by residues 379–382 (LGMQ), E402, and R469. Active-site residues include H514 and E516.

The protein belongs to the CTP synthase family. Homotetramer.

The enzyme catalyses UTP + L-glutamine + ATP + H2O = CTP + L-glutamate + ADP + phosphate + 2 H(+). It catalyses the reaction L-glutamine + H2O = L-glutamate + NH4(+). It carries out the reaction UTP + NH4(+) + ATP = CTP + ADP + phosphate + 2 H(+). Its pathway is pyrimidine metabolism; CTP biosynthesis via de novo pathway; CTP from UDP: step 2/2. Its activity is regulated as follows. Allosterically activated by GTP, when glutamine is the substrate; GTP has no effect on the reaction when ammonia is the substrate. The allosteric effector GTP functions by stabilizing the protein conformation that binds the tetrahedral intermediate(s) formed during glutamine hydrolysis. Inhibited by the product CTP, via allosteric rather than competitive inhibition. In terms of biological role, catalyzes the ATP-dependent amination of UTP to CTP with either L-glutamine or ammonia as the source of nitrogen. Regulates intracellular CTP levels through interactions with the four ribonucleotide triphosphates. This chain is CTP synthase, found in Legionella pneumophila (strain Corby).